A 146-amino-acid polypeptide reads, in one-letter code: UPF0735 ACT domain-containing protein Cbei_1295 (146 aa).

The ACT domain occupies threonine 70–methionine 145.

It belongs to the UPF0735 family.

This is UPF0735 ACT domain-containing protein Cbei_1295 from Clostridium beijerinckii (strain ATCC 51743 / NCIMB 8052) (Clostridium acetobutylicum).